A 156-amino-acid polypeptide reads, in one-letter code: ATP synthase subunit b 1 (156 aa).

A helical membrane pass occupies residues Leu-7–Pro-27.

This sequence belongs to the ATPase B chain family. In terms of assembly, F-type ATPases have 2 components, F(1) - the catalytic core - and F(0) - the membrane proton channel. F(1) has five subunits: alpha(3), beta(3), gamma(1), delta(1), epsilon(1). F(0) has three main subunits: a(1), b(2) and c(10-14). The alpha and beta chains form an alternating ring which encloses part of the gamma chain. F(1) is attached to F(0) by a central stalk formed by the gamma and epsilon chains, while a peripheral stalk is formed by the delta and b chains.

The protein localises to the cell inner membrane. Its function is as follows. F(1)F(0) ATP synthase produces ATP from ADP in the presence of a proton or sodium gradient. F-type ATPases consist of two structural domains, F(1) containing the extramembraneous catalytic core and F(0) containing the membrane proton channel, linked together by a central stalk and a peripheral stalk. During catalysis, ATP synthesis in the catalytic domain of F(1) is coupled via a rotary mechanism of the central stalk subunits to proton translocation. Functionally, component of the F(0) channel, it forms part of the peripheral stalk, linking F(1) to F(0). This Albidiferax ferrireducens (strain ATCC BAA-621 / DSM 15236 / T118) (Rhodoferax ferrireducens) protein is ATP synthase subunit b 1.